A 246-amino-acid chain; its full sequence is Chalcone--flavanone isomerase 1 (246 aa).

Positions 59, 124, and 201 each coordinate substrate.

The protein belongs to the chalcone isomerase family. Mostly expressed in siliques and flowers, and, to a lower extent, in leaves.

It carries out the reaction a chalcone = a flavanone.. It participates in secondary metabolite biosynthesis; flavonoid biosynthesis. Its function is as follows. Catalyzes the intramolecular cyclization of bicyclic chalcones into tricyclic (S)-flavanones. Responsible for the isomerization of 4,2',4',6'-tetrahydroxychalcone (also termed chalcone) into naringenin. The sequence is that of Chalcone--flavanone isomerase 1 (CHI1) from Arabidopsis thaliana (Mouse-ear cress).